The chain runs to 1534 residues: Activating signal cointegrator 1 complex subunit 3 (1534 aa).

Positions 83–267 (ETAYNTNENL…FLHVNPFIGL (185 aa)) constitute a Helicase ATP-binding 1 domain. 96 to 103 (APTGAGKT) contacts ATP. The short motif at 209-212 (DEVH) is the DEVH box element. Positions 294–500 (QLHDMEEVCY…SLADNLNAEI (207 aa)) constitute a Helicase C-terminal 1 domain. Residues 576 to 849 (STDLGRTASH…GSEAVCIINF (274 aa)) form the SEC63 1 domain. The region spanning 898–1073 (HTLYHTDTNV…WLGIGQVGLF (176 aa)) is the Helicase ATP-binding 2 domain. Residue 911–918 (APTGSGKT) participates in ATP binding. Positions 1015–1018 (DEIH) match the DEIH box motif. In terms of domain architecture, Helicase C-terminal 2 spans 1106–1313 (PVFQAIRTHS…GTVTSKQDAM (208 aa)). An SEC63 2 domain is found at 1374 to 1481 (PLTYGRISSY…TLPHIQKQEL (108 aa)).

This sequence belongs to the helicase family.

The protein localises to the nucleus. It is found in the nucleus speckle. It localises to the cytoplasm. The protein resides in the cytosol. The enzyme catalyses Couples ATP hydrolysis with the unwinding of duplex DNA by translocating in the 3'-5' direction.. The catalysed reaction is ATP + H2O = ADP + phosphate + H(+). Functionally, 3'-5' DNA helicase involved in repair of alkylated DNA. Promotes DNA unwinding to generate single-stranded substrate needed for alkbh3, enabling alkbh3 to process alkylated N3-methylcytosine (3mC) within double-stranded regions. Also involved in activation of the ribosome quality control (RQC) pathway, a pathway that degrades nascent peptide chains during problematic translation. Drives the splitting of stalled ribosomes. In Danio rerio (Zebrafish), this protein is Activating signal cointegrator 1 complex subunit 3 (ascc3).